The chain runs to 88 residues: Small ribosomal subunit protein bS20 (88 aa).

It belongs to the bacterial ribosomal protein bS20 family.

Binds directly to 16S ribosomal RNA. The sequence is that of Small ribosomal subunit protein bS20 from Bradyrhizobium sp. (strain BTAi1 / ATCC BAA-1182).